A 353-amino-acid chain; its full sequence is Casein kinase II subunit alpha (353 aa).

The Protein kinase domain maps to 39–324 (YQLVRKLGRG…AREAMDHPYF (286 aa)). Residues 45 to 53 (LGRGKYSEV) and K68 contribute to the ATP site. D156 serves as the catalytic Proton acceptor. The tract at residues 334–353 (MVSSNSPTPNALQGPISTTE) is disordered.

The protein belongs to the protein kinase superfamily. Ser/Thr protein kinase family. CK2 subfamily. In terms of assembly, tetramer of two alpha and two beta chains.

It catalyses the reaction L-seryl-[protein] + ATP = O-phospho-L-seryl-[protein] + ADP + H(+). It carries out the reaction L-threonyl-[protein] + ATP = O-phospho-L-threonyl-[protein] + ADP + H(+). Casein kinases are operationally defined by their preferential utilization of acidic proteins such as caseins as substrates. The alpha chain contains the catalytic site. May participate in Wnt signaling. The protein is Casein kinase II subunit alpha of Spodoptera frugiperda (Fall armyworm).